The sequence spans 819 residues: Capsid-associated protein Vp91 (819 aa).

Positions Met1 to Thr18 are cleaved as a signal peptide. A C2HC BV-type zinc finger spans residues Cys147–Cys196. 2 cysteine pairs are disulfide-bonded: Cys207-Cys220 and Cys260-Cys273. Asn210 is a glycosylation site (N-linked (GlcNAc...) asparagine; by host). In terms of domain architecture, Chitin-binding type-2 spans Asn223–Phe281. Residues Asn588 and Asn609 are each glycosylated (N-linked (GlcNAc...) asparagine; by host). Residues Gly650 to Glu671 form a disordered region. The segment covering Glu658–Glu671 has biased composition (pro residues). The N-linked (GlcNAc...) asparagine; by host glycan is linked to Asn752.

Its subcellular location is the virion. Functionally, probable capsid-associated protein. The polypeptide is Capsid-associated protein Vp91 (p91) (Orgyia pseudotsugata (Douglas-fir tussock moth)).